A 274-amino-acid polypeptide reads, in one-letter code: NADH-ubiquinone oxidoreductase chain 2 (274 aa).

Transmembrane regions (helical) follow at residues Met28 to Pro48, Leu54 to Ile74, Ile79 to Leu99, Leu107 to Glu127, Ser128 to Phe148, Phe171 to Pro191, Phe206 to Cys226, and Leu254 to Phe274.

This sequence belongs to the complex I subunit 2 family.

It is found in the mitochondrion inner membrane. The catalysed reaction is a ubiquinone + NADH + 5 H(+)(in) = a ubiquinol + NAD(+) + 4 H(+)(out). Its function is as follows. Core subunit of the mitochondrial membrane respiratory chain NADH dehydrogenase (Complex I) that is believed to belong to the minimal assembly required for catalysis. Complex I functions in the transfer of electrons from NADH to the respiratory chain. The immediate electron acceptor for the enzyme is believed to be ubiquinone. This Drosophila mauritiana (Fruit fly) protein is NADH-ubiquinone oxidoreductase chain 2 (mt:ND2).